Reading from the N-terminus, the 188-residue chain is Meiotically up-regulated gene 94 protein (188 aa).

Its subcellular location is the cytoplasm. The protein resides in the nucleus. In terms of biological role, has a role in meiosis. The polypeptide is Meiotically up-regulated gene 94 protein (mug94) (Schizosaccharomyces pombe (strain 972 / ATCC 24843) (Fission yeast)).